A 571-amino-acid chain; its full sequence is Proline--tRNA ligase (571 aa).

This sequence belongs to the class-II aminoacyl-tRNA synthetase family. ProS type 1 subfamily. In terms of assembly, homodimer.

The protein localises to the cytoplasm. It catalyses the reaction tRNA(Pro) + L-proline + ATP = L-prolyl-tRNA(Pro) + AMP + diphosphate. In terms of biological role, catalyzes the attachment of proline to tRNA(Pro) in a two-step reaction: proline is first activated by ATP to form Pro-AMP and then transferred to the acceptor end of tRNA(Pro). As ProRS can inadvertently accommodate and process non-cognate amino acids such as alanine and cysteine, to avoid such errors it has two additional distinct editing activities against alanine. One activity is designated as 'pretransfer' editing and involves the tRNA(Pro)-independent hydrolysis of activated Ala-AMP. The other activity is designated 'posttransfer' editing and involves deacylation of mischarged Ala-tRNA(Pro). The misacylated Cys-tRNA(Pro) is not edited by ProRS. The protein is Proline--tRNA ligase of Proteus mirabilis (strain HI4320).